Consider the following 347-residue polypeptide: FK506-binding protein-like (347 aa).

Residues 1–36 are disordered; it reads METSLISPMKENNTAQPQQREENTQQNLNAAVPIKQ. The residue at position 3 (Thr3) is a Phosphothreonine. 3 TPR repeats span residues 208–241, 250–283, and 284–317; these read AKEE…LLTL, TILH…EPGH, and LKAL…DPKN.

Forms a ternary complex with CDKN1A/p21 and HSP90AB1/Hsp90.

Its function is as follows. May be involved in response to X-ray. Regulates p21 protein stability by binding to Hsp90 and p21. In Rattus norvegicus (Rat), this protein is FK506-binding protein-like (Fkbpl).